Here is a 21-residue protein sequence, read N- to C-terminus: Cupiennin-6a (21 aa).

Residue S21 is modified to Serine amide.

As to expression, expressed by the venom gland.

It is found in the secreted. The chain is Cupiennin-6a from Cupiennius salei (American wandering spider).